Consider the following 149-residue polypeptide: Calmodulin (149 aa).

Residue Ala-2 is modified to N-acetylalanine. 4 EF-hand domains span residues 8 to 43, 44 to 79, 81 to 116, and 117 to 149; these read EQIAEFKEAFSLFDKDGDGTITTKELGTVMRSLGQN, PTEAELQDMINEVDADGNGTIDFPEFLSLMARKMKD, DTEEELIEAFKVFDRDGNGFISAAELRHVMTNLGEK, and LTDEEVDEMIREADVDGDGQINYEEFVKMMMAK. Ca(2+) contacts are provided by Asp-21, Asp-23, Asp-25, Thr-27, Glu-32, Asp-57, Asp-59, Asn-61, Thr-63, Glu-68, Asp-94, Asp-96, Asn-98, and Glu-105. Lys-116 is modified (N6,N6,N6-trimethyllysine). 5 residues coordinate Ca(2+): Asp-130, Asp-132, Asp-134, Gln-136, and Glu-141.

The protein belongs to the calmodulin family.

Calmodulin mediates the control of a large number of enzymes, ion channels and other proteins by Ca(2+). Among the enzymes to be stimulated by the calmodulin-Ca(2+) complex are a number of protein kinases and phosphatases. In Karlodinium veneficum (Dinoflagellate), this protein is Calmodulin.